The chain runs to 438 residues: Xanthine permease (438 aa).

13 helical membrane passes run 11–31, 41–61, 65–85, 100–120, 121–141, 154–174, 180–200, 220–240, 272–292, 308–328, 331–351, 367–387, and 396–416; these read LGIQHVLAMYAGAIVVPLIVG, LTYLVSIDIFMCGVATLLQVW, FFGIGLPVVLGCTFTAVSPMI, IIASGILVILISFFFGKLVSF, FPPVVTGSVVTIIGITLMPVA, FGDLSNLALAFTVLSIIVLLY, FIKSVSILIGILIGTFIAYFM, FYFGAPSFHAAPIITMSIVAI, AEGLAVLLGGIFNAFPYTAFS, VIVVTGVILMAFGLFPKIAAF, IIPSAVLGGAMVAMFGMVIAY, LLIVACSVGLGLGVTVVPDIF, and LLTTNGIVAGSFTAVVLNIVY.

Belongs to the nucleobase:cation symporter-2 (NCS2) (TC 2.A.40) family.

It localises to the cell membrane. Its function is as follows. Transport of xanthine in the cell. The chain is Xanthine permease (pbuX) from Bacillus subtilis (strain 168).